The chain runs to 336 residues: Corrinoid adenosyltransferase PduO (336 aa).

The segment at 1-185 (MAIYTRTGDA…IIREVSKRYL (185 aa)) is pduON. Positions 194-336 (KETTPVALSF…IAAINVGTHQ (143 aa)) are pduOC. Residue H207 participates in heme binding. E215 and Q218 together coordinate Mg(2+).

This sequence belongs to the Cob(I)alamin adenosyltransferase family. PduO subfamily. As to quaternary structure, the C-terminal domain (PduOC) forms stable octamers and also crystallizes as an octamer. Forms a complex with PduS. Heme b serves as cofactor. Mg(2+) is required as a cofactor.

The protein localises to the bacterial microcompartment. It catalyses the reaction cob(I)alamin-[corrinoid adenosyltransferase] + ATP = apo-[corrinoid adenosyltransferase] + adenosylcob(III)alamin + triphosphate. It participates in polyol metabolism; 1,2-propanediol degradation. The protein operates within cofactor biosynthesis; adenosylcobalamin biosynthesis. Inhibited by ADP but not significantly by other nucleotides, inhibited by diphosphate and less well by triphosphate. Its function is as follows. Converts cob(I)alamin to adenosylcobalamin (adenosylcob(III)alamin), the cofactor for propanediol dehydratase. Found in the bacterial microcompartment (BMC) dedicated to 1,2-propanediol (1,2-PD) degradation. For adenosylcobalamin synthesis dATP can replace ATP, but no other nucleotides will substitute. PduS and PduO allow regeneration of the adenosylcobalamin cofactor within the BMC. Functionally, the 1,2-PD-specific bacterial microcompartment (BMC) concentrates low levels of 1,2-PD catabolic enzymes, concentrates volatile reaction intermediates thus enhancing pathway flux and keeps the level of toxic, mutagenic propionaldehyde low. This is Corrinoid adenosyltransferase PduO from Salmonella typhimurium (strain LT2 / SGSC1412 / ATCC 700720).